The sequence spans 79 residues: Large ribosomal subunit protein bL28 (79 aa).

The protein belongs to the bacterial ribosomal protein bL28 family.

The polypeptide is Large ribosomal subunit protein bL28 (Christiangramia forsetii (strain DSM 17595 / CGMCC 1.15422 / KT0803) (Gramella forsetii)).